The chain runs to 248 residues: tRNA uridine(34) hydroxylase (248 aa).

Residues 124-218 (TKQDVIVVDT…YLEDTQNKNN (95 aa)) enclose the Rhodanese domain. Cys178 (cysteine persulfide intermediate) is an active-site residue.

This sequence belongs to the TrhO family.

It carries out the reaction uridine(34) in tRNA + AH2 + O2 = 5-hydroxyuridine(34) in tRNA + A + H2O. In terms of biological role, catalyzes oxygen-dependent 5-hydroxyuridine (ho5U) modification at position 34 in tRNAs. This Rickettsia bellii (strain OSU 85-389) protein is tRNA uridine(34) hydroxylase.